We begin with the raw amino-acid sequence, 273 residues long: Type II methyltransferase M2.MboI (273 aa).

The protein belongs to the N(4)/N(6)-methyltransferase family.

It catalyses the reaction a 2'-deoxyadenosine in DNA + S-adenosyl-L-methionine = an N(6)-methyl-2'-deoxyadenosine in DNA + S-adenosyl-L-homocysteine + H(+). Its function is as follows. A beta subtype methylase that recognizes the double-stranded sequence 5'-GATC-3', methylates A-2 on both strands, and protects the DNA from cleavage by the MboI endonuclease. This seems to be a weaker methylase than M1.MboI. This Moraxella bovis protein is Type II methyltransferase M2.MboI (mboIBM).